The primary structure comprises 688 residues: Potassium-transporting ATPase ATP-binding subunit (688 aa).

The next 4 helical transmembrane spans lie at 37–57 (FIVY…LFGI), 65–85 (ILFI…AEAI), 219–239 (IALQ…TASL), and 262–282 (LALL…AIGI). The 4-aspartylphosphate intermediate role is filled by Asp-313. Residues Asp-350, Glu-354, 383-390 (FTAKTRMS), and Lys-401 each bind ATP. Residues Asp-524 and Asp-528 each contribute to the Mg(2+) site. Transmembrane regions (helical) follow at residues 586–606 (IAND…GLFP), 622–642 (AILS…PLAL), and 668–688 (IIAP…LGIV).

It belongs to the cation transport ATPase (P-type) (TC 3.A.3) family. Type IA subfamily. As to quaternary structure, the system is composed of three essential subunits: KdpA, KdpB and KdpC.

It localises to the cell membrane. It catalyses the reaction K(+)(out) + ATP + H2O = K(+)(in) + ADP + phosphate + H(+). In terms of biological role, part of the high-affinity ATP-driven potassium transport (or Kdp) system, which catalyzes the hydrolysis of ATP coupled with the electrogenic transport of potassium into the cytoplasm. This subunit is responsible for energy coupling to the transport system and for the release of the potassium ions to the cytoplasm. The polypeptide is Potassium-transporting ATPase ATP-binding subunit (Clostridium perfringens (strain ATCC 13124 / DSM 756 / JCM 1290 / NCIMB 6125 / NCTC 8237 / Type A)).